The primary structure comprises 118 residues: Appetite-regulating hormone (118 aa).

The first 24 residues, 1-24 (MPSTGTICSLLLLSVLLMADLAMA), serve as a signal peptide directing secretion. Residue S27 is the site of O-decanoyl serine; alternate attachment. A lipid anchor (O-hexanoyl serine; alternate) is attached at S27. Residue S27 is the site of O-octanoyl serine; alternate attachment. The segment at 29 to 50 (LSPEHQKVQQRKESKKPAAKLK) is disordered. Positions 32 to 44 (EHQKVQQRKESKK) are enriched in basic and acidic residues. A propeptide spans 53–76 (ALEGWLGPEDSGEVEGTEDKLEIR) (removed in mature form). Leucine amide is present on L99. The propeptide at 100-118 (GKFLQDILWEEVTEAPADK) is removed in mature form.

This sequence belongs to the motilin family. In terms of processing, O-octanoylated by GOAT/MBOAT4. O-octanoylation is essential for ghrelin activity. Amidation of Leu-99 is essential for obestatin activity.

The protein resides in the secreted. Functionally, ghrelin is the ligand for growth hormone secretagogue receptor type 1 (GHSR). Induces the release of growth hormone from the pituitary. Has an appetite-stimulating effect, induces adiposity and stimulates gastric acid secretion. Involved in growth regulation. In terms of biological role, obestatin may be the ligand for GPR39. May have an appetite-reducing effect resulting in decreased food intake. May reduce gastric emptying activity and jejunal motility. This chain is Appetite-regulating hormone (GHRL), found in Sus scrofa (Pig).